The following is a 71-amino-acid chain: Small ribosomal subunit protein bS21 (71 aa).

Basic residues predominate over residues 49–59; it reads KAAAVKRAAKK. The interval 49-71 is disordered; the sequence is KAAAVKRAAKKVSRENARRVRMY. Over residues 60 to 71 the composition is skewed to basic and acidic residues; sequence VSRENARRVRMY.

The protein belongs to the bacterial ribosomal protein bS21 family.

This chain is Small ribosomal subunit protein bS21, found in Colwellia psychrerythraea (strain 34H / ATCC BAA-681) (Vibrio psychroerythus).